The sequence spans 497 residues: Glycerol kinase (497 aa).

Residue threonine 12 participates in ADP binding. ATP-binding residues include threonine 12, threonine 13, and serine 14. Threonine 12 is a binding site for sn-glycerol 3-phosphate. Arginine 16 serves as a coordination point for ADP. 4 residues coordinate sn-glycerol 3-phosphate: arginine 82, glutamate 83, tyrosine 134, and aspartate 243. Residues arginine 82, glutamate 83, tyrosine 134, aspartate 243, and glutamine 244 each contribute to the glycerol site. Residues threonine 265 and glycine 308 each contribute to the ADP site. Positions 265, 308, 312, and 409 each coordinate ATP. ADP-binding residues include glycine 409 and asparagine 413.

It belongs to the FGGY kinase family.

It carries out the reaction glycerol + ATP = sn-glycerol 3-phosphate + ADP + H(+). It functions in the pathway polyol metabolism; glycerol degradation via glycerol kinase pathway; sn-glycerol 3-phosphate from glycerol: step 1/1. With respect to regulation, inhibited by fructose 1,6-bisphosphate (FBP). Key enzyme in the regulation of glycerol uptake and metabolism. Catalyzes the phosphorylation of glycerol to yield sn-glycerol 3-phosphate. The sequence is that of Glycerol kinase from Nitratidesulfovibrio vulgaris (strain DSM 19637 / Miyazaki F) (Desulfovibrio vulgaris).